We begin with the raw amino-acid sequence, 429 residues long: 3-phosphoshikimate 1-carboxyvinyltransferase (429 aa).

3-phosphoshikimate is bound by residues lysine 23, serine 24, and arginine 28. Phosphoenolpyruvate is bound at residue lysine 23. Positions 95 and 123 each coordinate phosphoenolpyruvate. Serine 168, glutamine 170, aspartate 316, and lysine 343 together coordinate 3-phosphoshikimate. Glutamine 170 contacts phosphoenolpyruvate. Aspartate 316 serves as the catalytic Proton acceptor. Residues arginine 347 and arginine 389 each contribute to the phosphoenolpyruvate site.

This sequence belongs to the EPSP synthase family. In terms of assembly, monomer.

The protein localises to the cytoplasm. It catalyses the reaction 3-phosphoshikimate + phosphoenolpyruvate = 5-O-(1-carboxyvinyl)-3-phosphoshikimate + phosphate. Its pathway is metabolic intermediate biosynthesis; chorismate biosynthesis; chorismate from D-erythrose 4-phosphate and phosphoenolpyruvate: step 6/7. Its function is as follows. Catalyzes the transfer of the enolpyruvyl moiety of phosphoenolpyruvate (PEP) to the 5-hydroxyl of shikimate-3-phosphate (S3P) to produce enolpyruvyl shikimate-3-phosphate and inorganic phosphate. This is 3-phosphoshikimate 1-carboxyvinyltransferase from Bacillus cereus (strain ATCC 10987 / NRS 248).